The sequence spans 384 residues: Neuropeptide Y receptor type 1 (384 aa).

Residues 1–44 are Extracellular-facing; sequence MNSTLFSQVENHSVHSNFSEKNAQLLAFENDDCHLPLAMIFTLA. Asn2, Asn11, and Asn17 each carry an N-linked (GlcNAc...) asparagine glycan. A helical transmembrane segment spans residues 45 to 65; it reads LAYGAVIILGVSGNLALIIII. Topologically, residues 66–76 are cytoplasmic; sequence LKQKEMRNVTN. Residues 77-97 form a helical membrane-spanning segment; the sequence is ILIVNLSFSDLLVAIMCLPFT. Topologically, residues 98-116 are extracellular; sequence FVYTLMDHWVFGEAMCKLN. The cysteines at positions 113 and 198 are disulfide-linked. The helical transmembrane segment at 117-137 threads the bilayer; that stretch reads PFVQCVSITVSIFSLVLIAVE. Residues 138–154 are Cytoplasmic-facing; it reads RHQLIINPRGWRPNNRH. A helical transmembrane segment spans residues 155-175; sequence AYVGIAVIWVLAVASSLPFLI. Over 176–211 the chain is Extracellular; that stretch reads YQVMTDEPFQNVTLDAYKDKYVCFDQFPSDSHRLSY. The chain crosses the membrane as a helical span at residues 212-232; it reads TTLLLVLQYFGPLCFIFICYF. At 233 to 260 the chain is on the cytoplasmic side; it reads KIYIRLKRRNNMMDKMRDNKYRSSETKR. Residues 261–281 traverse the membrane as a helical segment; that stretch reads INIMLLSIVVAFAVCWLPLTI. Topologically, residues 282–299 are extracellular; it reads FNTVFDWNHQIIATCNHN. The helical transmembrane segment at 300–320 threads the bilayer; the sequence is LLFLLCHLTAMISTCVNPIFY. At 321–384 the chain is on the cytoplasmic side; the sequence is GFLNKNFQRD…INNNDDNEKI (64 aa). A lipid anchor (S-palmitoyl cysteine) is attached at Cys338. Ser368 is subject to Phosphoserine.

This sequence belongs to the G-protein coupled receptor 1 family.

The protein localises to the cell membrane. Its function is as follows. Receptor for neuropeptide Y and peptide YY. The rank order of affinity of this receptor for pancreatic polypeptides is NPY &gt; [Pro-34] PYY, PYY and [Leu-31, Pro-34] NPY &gt; NPY (2-36) &gt; [Ile-31, Gln-34] PP and PYY (3-36) &gt; PP &gt; NPY free acid. The chain is Neuropeptide Y receptor type 1 (NPY1R) from Homo sapiens (Human).